Here is a 409-residue protein sequence, read N- to C-terminus: S-adenosylmethionine synthase (409 aa).

Position 15 (His-15) interacts with ATP. Residue Asp-17 coordinates Mg(2+). Glu-43 is a K(+) binding site. L-methionine contacts are provided by Glu-56 and Gln-100. Residues 100–110 are flexible loop; sequence QSSDIAQGVNE. ATP-binding positions include 171–173, 248–249, Asp-257, 263–264, Ala-280, and Lys-284; these read DGK, KF, and RK. Asp-257 lines the L-methionine pocket. Residue Lys-288 coordinates L-methionine.

The protein belongs to the AdoMet synthase family. Homotetramer; dimer of dimers. Mg(2+) is required as a cofactor. Requires K(+) as cofactor.

Its subcellular location is the cytoplasm. The catalysed reaction is L-methionine + ATP + H2O = S-adenosyl-L-methionine + phosphate + diphosphate. Its pathway is amino-acid biosynthesis; S-adenosyl-L-methionine biosynthesis; S-adenosyl-L-methionine from L-methionine: step 1/1. Its function is as follows. Catalyzes the formation of S-adenosylmethionine (AdoMet) from methionine and ATP. The overall synthetic reaction is composed of two sequential steps, AdoMet formation and the subsequent tripolyphosphate hydrolysis which occurs prior to release of AdoMet from the enzyme. In Prochlorococcus marinus (strain NATL1A), this protein is S-adenosylmethionine synthase.